The following is a 290-amino-acid chain: 2-dehydro-3-deoxyphosphooctonate aldolase 1 (290 aa).

A2 is modified (N-acetylalanine).

This sequence belongs to the KdsA family. In terms of tissue distribution, expressed in shoots.

It localises to the cytoplasm. It catalyses the reaction D-arabinose 5-phosphate + phosphoenolpyruvate + H2O = 3-deoxy-alpha-D-manno-2-octulosonate-8-phosphate + phosphate. Catalyzes the stereospecific condensation of D-arabinose 5-phosphate and phosphoenolpyruvate to form 3-deoxy-D-manno-octulosonate 8-phosphate (KDO-8-phosphate) and inorganic phosphate. Involved in the biosynthesis of 3-deoxy-D-manno-octulosonate (KDO) which is an indispensable component of rhamnogalacturonan II (RG-II), a structurally complex pectic polysaccharide of the primary cell wall. RG-II is essential for the cell wall integrity of rapidly growing tissues and pollen tube growth and elongation. The chain is 2-dehydro-3-deoxyphosphooctonate aldolase 1 (KDSA1) from Arabidopsis thaliana (Mouse-ear cress).